Consider the following 212-residue polypeptide: Large ribosomal subunit protein bL25 (212 aa).

The segment at 183–212 (HDLPVASIHKPKGAKADDAEGEEGEEGGEE) is disordered. Residues 201-212 (AEGEEGEEGGEE) are compositionally biased toward acidic residues.

The protein belongs to the bacterial ribosomal protein bL25 family. CTC subfamily. Part of the 50S ribosomal subunit; part of the 5S rRNA/L5/L18/L25 subcomplex. Contacts the 5S rRNA. Binds to the 5S rRNA independently of L5 and L18.

Its function is as follows. This is one of the proteins that binds to the 5S RNA in the ribosome where it forms part of the central protuberance. The chain is Large ribosomal subunit protein bL25 from Marinobacter nauticus (strain ATCC 700491 / DSM 11845 / VT8) (Marinobacter aquaeolei).